Consider the following 434-residue polypeptide: MSNFSPREIVSELDRFIIGQKDAKRAVAIALRNRWRRQQLEGQMREEVMPKNILMIGPTGVGKTEISRRPAKLAGAPFVKVEATKFTEVGYVGRDVEQIIRDLVEIAITLVREKRREDVKAKAHLNAEERVLDALVGKTASPATRDSFRKKLRNGEMDDKEIEIEVSDSGASPNFEIPGMPGANIGVLNISDMLGKAMGGRTKTRKTTVKDSYPILINDESDKLLDQDQIVQEALRVSEDEGIVFIDEIDKIAAREGGSGAGVSREGVQRDLLPLVEDTTVATKYGPVKTDHILFITSGAFHVSKPSDLLPELQGRLPIRVELSALTREDFRRILTETEASLIKQYIALMETEEVKLEFSDDAIDALADIAVDLNATVENIGARRLQTVMEKVLDEISFTAPDKAGATFIIDAAYVKEKIGGLAKNTDLSRFIL.

ATP contacts are provided by residues isoleucine 18, 60–65 (GVGKTE), aspartate 247, glutamate 312, and arginine 384.

Belongs to the ClpX chaperone family. HslU subfamily. A double ring-shaped homohexamer of HslV is capped on each side by a ring-shaped HslU homohexamer. The assembly of the HslU/HslV complex is dependent on binding of ATP.

It is found in the cytoplasm. Its function is as follows. ATPase subunit of a proteasome-like degradation complex; this subunit has chaperone activity. The binding of ATP and its subsequent hydrolysis by HslU are essential for unfolding of protein substrates subsequently hydrolyzed by HslV. HslU recognizes the N-terminal part of its protein substrates and unfolds these before they are guided to HslV for hydrolysis. The chain is ATP-dependent protease ATPase subunit HslU from Brucella ovis (strain ATCC 25840 / 63/290 / NCTC 10512).